The following is a 103-amino-acid chain: MTEILRIELVSVNPESLEKVSRMFKEIADKMGVRVKGPIPLPTKRLRVTALRNPSGEGTNRYDKYELRIHKRIIDIPNPDERYIRSIMGITLPDDVKISIVLM.

This sequence belongs to the universal ribosomal protein uS10 family. In terms of assembly, part of the 30S ribosomal subunit.

Its function is as follows. Involved in the binding of tRNA to the ribosomes. This Korarchaeum cryptofilum (strain OPF8) protein is Small ribosomal subunit protein uS10.